The following is a 395-amino-acid chain: NADH-quinone oxidoreductase subunit D (395 aa).

This sequence belongs to the complex I 49 kDa subunit family. NDH-1 is composed of 14 different subunits. Subunits NuoB, C, D, E, F, and G constitute the peripheral sector of the complex.

The protein resides in the cell inner membrane. It catalyses the reaction a quinone + NADH + 5 H(+)(in) = a quinol + NAD(+) + 4 H(+)(out). Functionally, NDH-1 shuttles electrons from NADH, via FMN and iron-sulfur (Fe-S) centers, to quinones in the respiratory chain. The immediate electron acceptor for the enzyme in this species is believed to be ubiquinone. Couples the redox reaction to proton translocation (for every two electrons transferred, four hydrogen ions are translocated across the cytoplasmic membrane), and thus conserves the redox energy in a proton gradient. The protein is NADH-quinone oxidoreductase subunit D of Anaplasma phagocytophilum (strain HZ).